The following is a 290-amino-acid chain: Microtubule-associated protein P320 (290 aa).

8 consecutive repeats follow at residues 1-38 (SEYR…PIDP), 39-76 (SEYR…PIDP), 77-114 (SEYR…PIDP), 115-152 (SEYR…PIDP), 153-190 (SEYR…PIDP), 191-228 (SEYR…PIDP), 229-266 (SEYR…PIDP), and 267-290 (SEYR…DESH). Residues 251–290 (SHFLTTTHEAYKPIDPSEYRQKRTVGEEVTTDMRHVDESH) are disordered. Positions 259–290 (EAYKPIDPSEYRQKRTVGEEVTTDMRHVDESH) are enriched in basic and acidic residues.

It localises to the cytoplasm. Its subcellular location is the cytoskeleton. The sequence is that of Microtubule-associated protein P320 from Trypanosoma brucei brucei.